Reading from the N-terminus, the 307-residue chain is Ornithine carbamoyltransferase (307 aa).

Carbamoyl phosphate is bound by residues serine 54–threonine 57, glutamine 81, arginine 105, and histidine 132–glutamine 135. L-ornithine is bound by residues asparagine 163, aspartate 221, and serine 225–methionine 226. Carbamoyl phosphate-binding positions include cysteine 261–leucine 262 and arginine 289.

This sequence belongs to the aspartate/ornithine carbamoyltransferase superfamily. OTCase family.

The protein resides in the cytoplasm. It carries out the reaction carbamoyl phosphate + L-ornithine = L-citrulline + phosphate + H(+). It functions in the pathway amino-acid biosynthesis; L-arginine biosynthesis; L-arginine from L-ornithine and carbamoyl phosphate: step 1/3. Its function is as follows. Reversibly catalyzes the transfer of the carbamoyl group from carbamoyl phosphate (CP) to the N(epsilon) atom of ornithine (ORN) to produce L-citrulline. The protein is Ornithine carbamoyltransferase of Chromobacterium violaceum (strain ATCC 12472 / DSM 30191 / JCM 1249 / CCUG 213 / NBRC 12614 / NCIMB 9131 / NCTC 9757 / MK).